A 426-amino-acid chain; its full sequence is MTLKMIGCSHHDAAVEIREQLSFTENEINRTFELFGQRFADAELVLLSTCNRVELYGAGSNPASLQSDDLIDLVADCLNQSRDFVANHMIIREGREAVEHLFLVAASLDSMVVGEAQILSQVKQSYDLANDADRTGPITHGVFQAANRTAKRVQTETSIHRRRLSVPSVAIGEVVPEVFNRLQGKRVVLCGAGEMAEETLRYLKNGGANNLCVVNRSLDRAQKLADEFGADAESMDSLHDQIVQADLLIGTTSAEEPIVDASTFAALNAKRGGRIMLVLDLAVPRDFDPVIGDEPGVYLYQIDDLQAACNRNRREREKQWPKAKKIIDEEVDGFFQSLQQRATGPVIRRLRERADKVKAEELQRLFGKLNGSTDTAMQKEIEKSFDRLTNKLLHPPMASLRDDAADGHSRGLLEALRHLFNLGEDS.

Residues Thr-49–Arg-52, Ser-110, Glu-115–Gln-117, and Gln-121 contribute to the substrate site. Cys-50 functions as the Nucleophile in the catalytic mechanism. Residue Gly-191–Ala-196 participates in NADP(+) binding.

It belongs to the glutamyl-tRNA reductase family. In terms of assembly, homodimer.

The catalysed reaction is (S)-4-amino-5-oxopentanoate + tRNA(Glu) + NADP(+) = L-glutamyl-tRNA(Glu) + NADPH + H(+). It functions in the pathway porphyrin-containing compound metabolism; protoporphyrin-IX biosynthesis; 5-aminolevulinate from L-glutamyl-tRNA(Glu): step 1/2. Functionally, catalyzes the NADPH-dependent reduction of glutamyl-tRNA(Glu) to glutamate 1-semialdehyde (GSA). This Rhodopirellula baltica (strain DSM 10527 / NCIMB 13988 / SH1) protein is Glutamyl-tRNA reductase.